The chain runs to 445 residues: Tryptophan 5-hydroxylase 1 (445 aa).

In terms of domain architecture, ACT spans 19–94 (AIIFSLKNEV…SIVSMNPTEH (76 aa)). Ser-58 bears the Phosphoserine; by PKA mark. Residues Tyr-236, Arg-258, and Thr-266 each coordinate L-tryptophan. Positions 273, 278, and 318 each coordinate Fe cation. Ser-337 and Ile-367 together coordinate L-tryptophan.

It belongs to the biopterin-dependent aromatic amino acid hydroxylase family. Homotetramer. It depends on Fe(2+) as a cofactor.

The enzyme catalyses (6R)-L-erythro-5,6,7,8-tetrahydrobiopterin + L-tryptophan + O2 = 5-hydroxy-L-tryptophan + (4aS,6R)-4a-hydroxy-L-erythro-5,6,7,8-tetrahydrobiopterin. The protein operates within aromatic compound metabolism; serotonin biosynthesis; serotonin from L-tryptophan: step 1/2. Functionally, oxidizes L-tryptophan to 5-hydroxy-l-tryptophan in the rate-determining step of serotonin biosynthesis. In Gallus gallus (Chicken), this protein is Tryptophan 5-hydroxylase 1 (TPH1).